The sequence spans 324 residues: Hairy/enhancer-of-split related with YRPW motif protein 2 (324 aa).

The interval 1–34 is disordered; it reads MKRPCEDSTSDSDMDETIDVGSENNYSGQSNGSF. Acidic residues predominate over residues 8-18; sequence STSDSDMDETI. Residues 22–34 show a composition bias toward polar residues; it reads SENNYSGQSNGSF. The 56-residue stretch at 48 to 103 folds into the bHLH domain; sequence ARKKRRGIIEKRRRDRINNSLSELRRLVPTAFEKQGSAKLEKAEILQMTVDHLKML. Positions 122–157 constitute an Orange domain; the sequence is LSIGFRECLTEVARYLSSVEGLDSSDPLRVRLVSHL. Over residues 294 to 311 the composition is skewed to low complexity; that stretch reads SSSVSTSTTSQQSSGSSS. Residues 294-324 are disordered; that stretch reads SSSVSTSTTSQQSSGSSSKPYRPWGTEVGAF. The YRPW motif motif lies at 314-317; it reads YRPW.

It belongs to the HEY family.

It is found in the nucleus. Functionally, transcriptional repressor. Downstream effector of Notch signaling which regulates cell fate choice in angioblasts. Represses the venous cell fate, thereby promoting the arterial cell fate and aorta formation. In Danio rerio (Zebrafish), this protein is Hairy/enhancer-of-split related with YRPW motif protein 2 (hey2).